A 320-amino-acid polypeptide reads, in one-letter code: Malate dehydrogenase (320 aa).

NAD(+) contacts are provided by residues 10–15 (GAGNIG) and Asp34. Residues Arg83 and Arg89 each coordinate substrate. NAD(+) contacts are provided by residues Asn96 and 119–121 (ITN). Substrate is bound by residues Asn121 and Arg152. The active-site Proton acceptor is His176.

It belongs to the LDH/MDH superfamily. MDH type 3 family.

It catalyses the reaction (S)-malate + NAD(+) = oxaloacetate + NADH + H(+). Its function is as follows. Catalyzes the reversible oxidation of malate to oxaloacetate. This is Malate dehydrogenase from Sphingopyxis alaskensis (strain DSM 13593 / LMG 18877 / RB2256) (Sphingomonas alaskensis).